The sequence spans 141 residues: Nucleoside diphosphate kinase (141 aa).

Residues Lys-11, Phe-59, Arg-87, Thr-93, Arg-104, and Asn-114 each contribute to the ATP site.

This sequence belongs to the NDK family. Homotetramer. Mg(2+) serves as cofactor.

The protein localises to the cytoplasm. It catalyses the reaction a 2'-deoxyribonucleoside 5'-diphosphate + ATP = a 2'-deoxyribonucleoside 5'-triphosphate + ADP. The catalysed reaction is a ribonucleoside 5'-diphosphate + ATP = a ribonucleoside 5'-triphosphate + ADP. Its function is as follows. Major role in the synthesis of nucleoside triphosphates other than ATP. The ATP gamma phosphate is transferred to the NDP beta phosphate via a ping-pong mechanism, using a phosphorylated active-site intermediate. The sequence is that of Nucleoside diphosphate kinase from Saccharophagus degradans (strain 2-40 / ATCC 43961 / DSM 17024).